Here is a 549-residue protein sequence, read N- to C-terminus: Lipase 5 (549 aa).

The N-terminal stretch at methionine 1–alanine 15 is a signal peptide. Residues cysteine 75 and cysteine 112 are joined by a disulfide bond. The active-site Acyl-ester intermediate is the serine 224. An intrachain disulfide couples cysteine 283 to cysteine 292. An N-linked (GlcNAc...) asparagine glycan is attached at asparagine 329. Glutamate 356 functions as the Charge relay system in the catalytic mechanism. N-linked (GlcNAc...) asparagine glycosylation is present at asparagine 366. The active-site Charge relay system is the histidine 464.

This sequence belongs to the type-B carboxylesterase/lipase family.

The catalysed reaction is a triacylglycerol + H2O = a diacylglycerol + a fatty acid + H(+). The sequence is that of Lipase 5 (LIP5) from Diutina rugosa (Yeast).